The following is a 270-amino-acid chain: Malonyl-[acyl-carrier protein] O-methyltransferase (270 aa).

It belongs to the methyltransferase superfamily.

It carries out the reaction malonyl-[ACP] + S-adenosyl-L-methionine = malonyl-[ACP] methyl ester + S-adenosyl-L-homocysteine. Its pathway is cofactor biosynthesis; biotin biosynthesis. In terms of biological role, converts the free carboxyl group of a malonyl-thioester to its methyl ester by transfer of a methyl group from S-adenosyl-L-methionine (SAM). It allows to synthesize pimeloyl-ACP via the fatty acid synthetic pathway. The polypeptide is Malonyl-[acyl-carrier protein] O-methyltransferase (Marinomonas sp. (strain MWYL1)).